A 96-amino-acid chain; its full sequence is MKTALLLFFALVFIAFETEACRPGALTVAPDGCNMCTCLSNGKLGRCTHDLICPPRMFKLECEPGKPFKNDCNDCICSEDGLTAKCTRKLCIHKKP.

Residues 1–20 form the signal peptide; the sequence is MKTALLLFFALVFIAFETEA. 3 cysteine pairs are disulfide-bonded: Cys-21/Cys-38, Cys-33/Cys-53, and Cys-36/Cys-47. Pacifastin domains follow at residues 21 to 55 and 59 to 94; these read CRPG…ICPP and KLEC…CIHK. Positions 54 to 56 are pro-Pro-Arg motif necessary for proteolytic processing; sequence PPR. 3 disulfide bridges follow: Cys-62–Cys-77, Cys-72–Cys-91, and Cys-75–Cys-86.

This sequence belongs to the protease inhibitor I19 family. Expressed by the venom gland.

The protein localises to the secreted. Its function is as follows. Inhibits trypsin activity and prophenoloxidase (PPO) activation, an enzyme essential for both clotting and insect innate immune responses. It does not inhibit activity of chymotrypsin and protease K, and has no effect on phenoloxidase (PO) activity. This chain is U-reduvitoxin-Pr12a, found in Platymeris rhadamanthus (Red spot assassin bug).